Here is a 121-residue protein sequence, read N- to C-terminus: Large ribosomal subunit protein bL20 (121 aa).

This sequence belongs to the bacterial ribosomal protein bL20 family.

Binds directly to 23S ribosomal RNA and is necessary for the in vitro assembly process of the 50S ribosomal subunit. It is not involved in the protein synthesizing functions of that subunit. This Wolbachia sp. subsp. Drosophila simulans (strain wRi) protein is Large ribosomal subunit protein bL20.